Reading from the N-terminus, the 610-residue chain is UvrABC system protein C (610 aa).

Positions 16 to 94 (SQPGVYRMYD…IKLYQPRYNV (79 aa)) constitute a GIY-YIG domain. Residues 204 to 239 (DQVLTQLISRMETASQNLEFEEAARIRDQIQAVRRV) form the UVR domain.

This sequence belongs to the UvrC family. In terms of assembly, interacts with UvrB in an incision complex.

It localises to the cytoplasm. Its function is as follows. The UvrABC repair system catalyzes the recognition and processing of DNA lesions. UvrC both incises the 5' and 3' sides of the lesion. The N-terminal half is responsible for the 3' incision and the C-terminal half is responsible for the 5' incision. This is UvrABC system protein C from Escherichia coli (strain ATCC 8739 / DSM 1576 / NBRC 3972 / NCIMB 8545 / WDCM 00012 / Crooks).